The chain runs to 264 residues: Vacuolar protein sorting-associated protein 75 (264 aa).

Position 3 is a phosphoserine (Ser-3). The tract at residues Leu-223–Val-264 is disordered.

This sequence belongs to the nucleosome assembly protein (NAP) family. Homodimer. Homotetramer. Forms a complex with RTT109; consisting of a VPS75 dimer contacted by two RTT109 subunits. Interacts with RTT109; the interaction is direct. Interacts with ASF1. Interacts with histone H3/H4 heterodimers and heterotetramers via histone H3.

The protein resides in the nucleus. Histone chaperone which acts as a cofactor stimulating histone H3 acetylation by RTT109. Preferentially stimulates histone H3 'Lys-9' acetylation by RTT109. May also stimulate histone H3 'Lys-56' acetylation by RTT109. Assembles nucleosomes (in vitro). In Saccharomyces cerevisiae (strain ATCC 204508 / S288c) (Baker's yeast), this protein is Vacuolar protein sorting-associated protein 75 (VPS75).